Consider the following 498-residue polypeptide: ATP synthase subunit beta, chloroplastic (498 aa).

An ATP-binding site is contributed by 172-179 (GGAGVGKT).

Belongs to the ATPase alpha/beta chains family. F-type ATPases have 2 components, CF(1) - the catalytic core - and CF(0) - the membrane proton channel. CF(1) has five subunits: alpha(3), beta(3), gamma(1), delta(1), epsilon(1). CF(0) has four main subunits: a(1), b(1), b'(1) and c(9-12).

It localises to the plastid. Its subcellular location is the chloroplast thylakoid membrane. It carries out the reaction ATP + H2O + 4 H(+)(in) = ADP + phosphate + 5 H(+)(out). Its function is as follows. Produces ATP from ADP in the presence of a proton gradient across the membrane. The catalytic sites are hosted primarily by the beta subunits. The sequence is that of ATP synthase subunit beta, chloroplastic from Phormium tenax (New Zealand flax).